The sequence spans 707 residues: 65-kDa microtubule-associated protein 3 (707 aa).

Coiled-coil stretches lie at residues 49 to 84, 157 to 179, 269 to 289, 354 to 374, and 464 to 486; these read LEVY…CSAM, NLSM…EKID, QQEY…ITEA, IVDA…IKEE, and LEEY…DQKK. The interval 495–574 is disordered; that stretch reads QEALYGSKPS…PSRKQSMNPS (80 aa). Positions 500–512 are enriched in low complexity; the sequence is GSKPSPSKPLGGK. Phosphoserine occurs at positions 504 and 528.

The protein belongs to the MAP65/ASE1 family. In terms of assembly, forms a dimer. Binds to microtubules (MT) during cell division. Bundles polymerized MT via the formation of 25-nm crossbridges with centrally located endocytic MT, and midline phragmoplast MT. Expressed in all tissues enriched in dividing cells, such as the root and shoot apical meristem, foliar primordia, and young leaves, and embryos.

It localises to the nucleus. It is found in the cytoplasm. The protein localises to the cytoskeleton. The protein resides in the phragmoplast. In terms of biological role, microtubule-associated protein that plays a critical role in organizing the mitotic microtubule array during both early and late mitosis in all plant organs. Essential for the cytokinesis, especially in roots, by maintaining the integrity of the overlapped microtubules in the phragmoplast. Required during root morphogenesis. Needed for giant cell development during root knot nematode infection, where cytokinesis is initiated but not completed. This chain is 65-kDa microtubule-associated protein 3 (MAP65-3), found in Arabidopsis thaliana (Mouse-ear cress).